A 735-amino-acid polypeptide reads, in one-letter code: Wall-associated receptor kinase 1 (735 aa).

A signal peptide spans 1-24 (MKVQEGLFLVAIFFSLACTQLVKG). Topologically, residues 25–331 (QHQPGENCQN…TTTMSCKRKE (307 aa)) are extracellular. N-linked (GlcNAc...) asparagine glycosylation is found at Asn-38, Asn-56, Asn-80, Asn-90, Asn-113, Asn-140, Asn-209, Asn-235, and Asn-250. The tract at residues 67–254 (RPHVLSDIEV…SICGGNSTCL (188 aa)) is polygalacturonic acid-binding. The 48-residue stretch at 234–281 (GNQTCEQVGSTSICGGNSTCLDSTPRNGYICRCNEGFDGNPYLSAGCQ) folds into the EGF-like 1 domain. 6 disulfides stabilise this stretch: Cys-238–Cys-253, Cys-247–Cys-264, Cys-266–Cys-280, Cys-286–Cys-303, Cys-297–Cys-312, and Cys-314–Cys-327. The EGF-like 2; calcium-binding domain occupies 282–328 (DVNECTTSSTIHRHNCSDPKTCRNKVGGFYCKCQSGYRLDTTTMSCK). The N-linked (GlcNAc...) asparagine glycan is linked to Asn-296. The helical transmembrane segment at 332 to 352 (FAWTTILLVTTIGFLVILLGV) threads the bilayer. Residues 353–735 (ACIQQRMKHL…VAILDIETGR (383 aa)) are Cytoplasmic-facing. Position 398 is a phosphothreonine (Thr-398). The 284-residue stretch at 409–692 (YAESRILGQG…RVEKTKHKWS (284 aa)) folds into the Protein kinase domain. ATP-binding positions include 415–423 (LGQGGQGTV) and Lys-437. Tyr-482 bears the Phosphotyrosine mark. Asp-534 functions as the Proton acceptor in the catalytic mechanism. Residues Thr-568 and Thr-573 each carry the phosphothreonine modification. Phosphotyrosine is present on Tyr-581.

Belongs to the protein kinase superfamily. Ser/Thr protein kinase family. As to quaternary structure, interacts with the glycine-rich proteins GRP3 and GRP3S, and the type 2C protein phosphatase KAPP. Component of a 500 kDa complex, composed of WAK1, GRP3 and KAPP. Interacts with the oxygen-evolving enhancer protein 2 (OEE2). As to expression, predominantly expressed in green tissues such as stems and leaves. Detected at organ junctions.

The protein resides in the membrane. The catalysed reaction is L-seryl-[protein] + ATP = O-phospho-L-seryl-[protein] + ADP + H(+). It carries out the reaction L-threonyl-[protein] + ATP = O-phospho-L-threonyl-[protein] + ADP + H(+). In terms of biological role, serine/threonine-protein kinase that may function as a signaling receptor of extracellular matrix component. Binding to pectin may have significance in the control of cell expansion, morphogenesis and development. Required during plant's response to pathogen infection and in plant defense against heavy metal toxicity. Phosphorylates the oxygen-evolving enhancer protein 2 (OEE2) in an GRP-3-dependent manner. In Arabidopsis thaliana (Mouse-ear cress), this protein is Wall-associated receptor kinase 1 (WAK1).